Consider the following 144-residue polypeptide: MKSARRRSRELATQGLYQWLLSGSPGGEIDAQLRGAQGFDKADHEHLDAILHGVIRDSEALSAAIAPCLDRPIEQLSPVERAVLLVAAFELKNHVDIPYRVVINEAVELAKTFGGADGYKYVNGVLDKLSAQLRVDETQAARKR.

This sequence belongs to the NusB family.

Its function is as follows. Involved in transcription antitermination. Required for transcription of ribosomal RNA (rRNA) genes. Binds specifically to the boxA antiterminator sequence of the ribosomal RNA (rrn) operons. This is Transcription antitermination protein NusB from Paraburkholderia phytofirmans (strain DSM 17436 / LMG 22146 / PsJN) (Burkholderia phytofirmans).